The following is a 389-amino-acid chain: Leucine aminopeptidase 1 (389 aa).

The N-terminal stretch at 1–18 (MKSAALLLPLYTAAFAAA) is a signal peptide. A propeptide spanning residues 19 to 89 (AFHHEHAQAV…TLNHRINAES (71 aa)) is cleaved from the precursor. N-linked (GlcNAc...) asparagine glycosylation is found at N99, N146, and N156. Residues H188, D207, E246, and D273 each coordinate Zn(2+). The cysteines at positions 322 and 326 are disulfide-linked. A Zn(2+)-binding site is contributed by H355.

It belongs to the peptidase M28 family. M28E subfamily. Monomer. Requires Zn(2+) as cofactor.

The protein resides in the secreted. Extracellular aminopeptidase that allows assimilation of proteinaceous substrates. This Pyrenophora tritici-repentis (strain Pt-1C-BFP) (Wheat tan spot fungus) protein is Leucine aminopeptidase 1 (lap1).